A 466-amino-acid chain; its full sequence is 3-isopropylmalate dehydratase large subunit (466 aa).

Residues Cys-347, Cys-407, and Cys-410 each coordinate [4Fe-4S] cluster.

The protein belongs to the aconitase/IPM isomerase family. LeuC type 1 subfamily. Heterodimer of LeuC and LeuD. Requires [4Fe-4S] cluster as cofactor.

The enzyme catalyses (2R,3S)-3-isopropylmalate = (2S)-2-isopropylmalate. It functions in the pathway amino-acid biosynthesis; L-leucine biosynthesis; L-leucine from 3-methyl-2-oxobutanoate: step 2/4. Functionally, catalyzes the isomerization between 2-isopropylmalate and 3-isopropylmalate, via the formation of 2-isopropylmaleate. The chain is 3-isopropylmalate dehydratase large subunit from Klebsiella pneumoniae subsp. pneumoniae (strain ATCC 700721 / MGH 78578).